The sequence spans 129 residues: NADH-ubiquinone oxidoreductase chain 3 (129 aa).

3 helical membrane-spanning segments follow: residues 4 to 24, 48 to 68, and 82 to 102; these read FYMYLAPIVAGVLIGLNWLLA, AAFSVAFILVAILFLPFDLEI, and GLYGLIILIIFLMMLVIAFIL.

The protein belongs to the complex I subunit 3 family.

Its subcellular location is the mitochondrion membrane. It catalyses the reaction a ubiquinone + NADH + 5 H(+)(in) = a ubiquinol + NAD(+) + 4 H(+)(out). Core subunit of the mitochondrial membrane respiratory chain NADH dehydrogenase (Complex I) that is believed to belong to the minimal assembly required for catalysis. Complex I functions in the transfer of electrons from NADH to the respiratory chain. The immediate electron acceptor for the enzyme is believed to be ubiquinone. The chain is NADH-ubiquinone oxidoreductase chain 3 (NAD3) from Candida albicans (strain SC5314 / ATCC MYA-2876) (Yeast).